Reading from the N-terminus, the 245-residue chain is 1-(5-phosphoribosyl)-5-[(5-phosphoribosylamino)methylideneamino] imidazole-4-carboxamide isomerase (245 aa).

Catalysis depends on Asp8, which acts as the Proton acceptor. Catalysis depends on Asp130, which acts as the Proton donor.

This sequence belongs to the HisA/HisF family.

It localises to the cytoplasm. It carries out the reaction 1-(5-phospho-beta-D-ribosyl)-5-[(5-phospho-beta-D-ribosylamino)methylideneamino]imidazole-4-carboxamide = 5-[(5-phospho-1-deoxy-D-ribulos-1-ylimino)methylamino]-1-(5-phospho-beta-D-ribosyl)imidazole-4-carboxamide. Its pathway is amino-acid biosynthesis; L-histidine biosynthesis; L-histidine from 5-phospho-alpha-D-ribose 1-diphosphate: step 4/9. This Pseudomonas aeruginosa (strain LESB58) protein is 1-(5-phosphoribosyl)-5-[(5-phosphoribosylamino)methylideneamino] imidazole-4-carboxamide isomerase.